The following is a 295-amino-acid chain: Pantothenate synthetase (295 aa).

29 to 36 is a binding site for ATP; sequence MGALHSGH. The Proton donor role is filled by histidine 36. Position 60 (glutamine 60) interacts with (R)-pantoate. Position 60 (glutamine 60) interacts with beta-alanine. An ATP-binding site is contributed by 158 to 161; sequence GQKD. Residue glutamine 164 participates in (R)-pantoate binding. Residues valine 187 and 195–198 each bind ATP; that span reads LSSR.

It belongs to the pantothenate synthetase family. As to quaternary structure, homodimer.

It is found in the cytoplasm. It carries out the reaction (R)-pantoate + beta-alanine + ATP = (R)-pantothenate + AMP + diphosphate + H(+). The protein operates within cofactor biosynthesis; (R)-pantothenate biosynthesis; (R)-pantothenate from (R)-pantoate and beta-alanine: step 1/1. Catalyzes the condensation of pantoate with beta-alanine in an ATP-dependent reaction via a pantoyl-adenylate intermediate. The sequence is that of Pantothenate synthetase from Paenarthrobacter aurescens (strain TC1).